Here is a 291-residue protein sequence, read N- to C-terminus: tRNA-cytidine(32) 2-sulfurtransferase (291 aa).

Positions 36–41 (SGGKDS) match the PP-loop motif motif. Cysteine 111, cysteine 114, and cysteine 202 together coordinate [4Fe-4S] cluster. Residues 258 to 291 (RDPWLDAEDEEAEDCGEPPAGDGVVSLGGARGGR) form a disordered region. Acidic residues predominate over residues 262-273 (LDAEDEEAEDCG).

Belongs to the TtcA family. In terms of assembly, homodimer. Mg(2+) is required as a cofactor. It depends on [4Fe-4S] cluster as a cofactor.

Its subcellular location is the cytoplasm. It catalyses the reaction cytidine(32) in tRNA + S-sulfanyl-L-cysteinyl-[cysteine desulfurase] + AH2 + ATP = 2-thiocytidine(32) in tRNA + L-cysteinyl-[cysteine desulfurase] + A + AMP + diphosphate + H(+). It participates in tRNA modification. Functionally, catalyzes the ATP-dependent 2-thiolation of cytidine in position 32 of tRNA, to form 2-thiocytidine (s(2)C32). The sulfur atoms are provided by the cysteine/cysteine desulfurase (IscS) system. This Anaeromyxobacter dehalogenans (strain 2CP-1 / ATCC BAA-258) protein is tRNA-cytidine(32) 2-sulfurtransferase.